The sequence spans 363 residues: NADH-quinone oxidoreductase subunit H (363 aa).

9 helical membrane passes run 62 to 82 (GPMY…KLLF), 96 to 116 (FVIA…VVPF), 127 to 147 (VGLL…ILAG), 163 to 183 (AAQV…VMIA), 202 to 222 (FFDW…VSGV), 238 to 257 (EIVA…LFFL), 264 to 286 (ILVS…QGWV), 299 to 319 (KGGW…YIWF), and 339 to 359 (FIPL…YGVI).

Belongs to the complex I subunit 1 family. NDH-1 is composed of 14 different subunits. Subunits NuoA, H, J, K, L, M, N constitute the membrane sector of the complex.

It is found in the cell inner membrane. It carries out the reaction a quinone + NADH + 5 H(+)(in) = a quinol + NAD(+) + 4 H(+)(out). In terms of biological role, NDH-1 shuttles electrons from NADH, via FMN and iron-sulfur (Fe-S) centers, to quinones in the respiratory chain. The immediate electron acceptor for the enzyme in this species is believed to be ubiquinone. Couples the redox reaction to proton translocation (for every two electrons transferred, four hydrogen ions are translocated across the cytoplasmic membrane), and thus conserves the redox energy in a proton gradient. This subunit may bind ubiquinone. The protein is NADH-quinone oxidoreductase subunit H of Xanthomonas axonopodis pv. citri (strain 306).